The following is a 593-amino-acid chain: MTTGSALYIPPYKADDQDVVVELNNRFGPEAFTAQATRTGMPVLWVTRSKLVEVLTFLRNLPKPYVMLYDLHGVDERLRTKRQGLPGADFSVFYHLLSIERNSDVMIKVALSEGDLSLPTVTGIWPNANWYEREVWDMFGIDFAGHPHLSRIMMPPTWEGHPLRKDFPARATEFDPFSLNLAKQQLEEEAARFRPEDWGMKRSGANEDYMFLNLGPNHPSAHGAFRIILQLDGEEIVDCVPDIGYHHRGAEKMAERQSWHSFIPYTDRIDYLGGVMNNLPYVLSVEKLAGIKVPEKVDVIRIMMAEFFRITSHLLFLGTYIQDVGAMTPVFFTFTDRQRAYTVIEAITGFRLHPAWYRIGGVAHDLPRGWEKLVKDFVEWLPKRLDEYTKAALQNSILKGRTIGVAAYNTKEALEWGVTGAGLRSTGCDFDLRKARPYSGYENFEFEVPLAANGDAYDRCMVRVEEMRQSIKIIDQCLRNMPEGPYKADHPLTTPPPKERTLQHIETLITHFLQVSWGPVMPANESFQMIEATKGINSYYLTSDGGTMSYRTRIRTPSFAHLQQIPSVIRGSMVADLIAYLGSIDFVMADVDR.

The interval 1 to 184 is NADH dehydrogenase I subunit C; it reads MTTGSALYIP…DPFSLNLAKQ (184 aa). The tract at residues 208 to 593 is NADH dehydrogenase I subunit D; the sequence is DYMFLNLGPN…IDFVMADVDR (386 aa).

This sequence in the N-terminal section; belongs to the complex I 30 kDa subunit family. In the C-terminal section; belongs to the complex I 49 kDa subunit family. In terms of assembly, NDH-1 is composed of 13 different subunits. Subunits NuoB, CD, E, F, and G constitute the peripheral sector of the complex.

Its subcellular location is the cell inner membrane. It carries out the reaction a quinone + NADH + 5 H(+)(in) = a quinol + NAD(+) + 4 H(+)(out). NDH-1 shuttles electrons from NADH, via FMN and iron-sulfur (Fe-S) centers, to quinones in the respiratory chain. The immediate electron acceptor for the enzyme in this species is believed to be ubiquinone. Couples the redox reaction to proton translocation (for every two electrons transferred, four hydrogen ions are translocated across the cytoplasmic membrane), and thus conserves the redox energy in a proton gradient. The sequence is that of NADH-quinone oxidoreductase subunit C/D from Pseudomonas fluorescens (strain ATCC BAA-477 / NRRL B-23932 / Pf-5).